Here is a 178-residue protein sequence, read N- to C-terminus: MSEHKGPTGAMVDPESLPYRPCVGLMVLNKAGLVWAGRRIVIPGDEMDGATQLWQMPQGGIDKGEDPAQAALRELYEETGMTSVSLLEEASDWINYDLPPHLVGLALKGKYRGQTQKWFAYRFEGDESEIAINPPPGGHTAEFDCWEWKPMADLPNLIVPFKRKVYEQVVATFRHLAA.

The Nudix hydrolase domain maps to 18–171; it reads PYRPCVGLMV…KRKVYEQVVA (154 aa). Positions 59-80 match the Nudix box motif; it reads GGIDKGEDPAQAALRELYEETG.

Belongs to the Nudix hydrolase family. RppH subfamily. It depends on a divalent metal cation as a cofactor.

Its function is as follows. Accelerates the degradation of transcripts by removing pyrophosphate from the 5'-end of triphosphorylated RNA, leading to a more labile monophosphorylated state that can stimulate subsequent ribonuclease cleavage. In Brucella melitensis biotype 2 (strain ATCC 23457), this protein is RNA pyrophosphohydrolase.